We begin with the raw amino-acid sequence, 414 residues long: Pre-mRNA-processing protein 45 (414 aa).

Disordered stretches follow at residues 128 to 159 (ESKR…DTPI) and 264 to 292 (RSKI…KKIK). The segment covering 135 to 146 (LQPSRQKNTSSK) has biased composition (polar residues).

Belongs to the SNW family. Associated with the spliceosome.

Its subcellular location is the nucleus. In terms of biological role, involved in pre-mRNA splicing. The polypeptide is Pre-mRNA-processing protein 45 (PRP45) (Candida glabrata (strain ATCC 2001 / BCRC 20586 / JCM 3761 / NBRC 0622 / NRRL Y-65 / CBS 138) (Yeast)).